Consider the following 437-residue polypeptide: Glutamyl-tRNA reductase (437 aa).

Residues 49–52, serine 109, 114–116, and glutamine 120 each bind substrate; these read TCNR and ETQ. Cysteine 50 acts as the Nucleophile in catalysis. 189-194 lines the NADP(+) pocket; sequence GAGKMS.

This sequence belongs to the glutamyl-tRNA reductase family. In terms of assembly, homodimer.

The enzyme catalyses (S)-4-amino-5-oxopentanoate + tRNA(Glu) + NADP(+) = L-glutamyl-tRNA(Glu) + NADPH + H(+). It functions in the pathway porphyrin-containing compound metabolism; protoporphyrin-IX biosynthesis; 5-aminolevulinate from L-glutamyl-tRNA(Glu): step 1/2. In terms of biological role, catalyzes the NADPH-dependent reduction of glutamyl-tRNA(Glu) to glutamate 1-semialdehyde (GSA). This chain is Glutamyl-tRNA reductase, found in Paenibacillus macerans (Bacillus macerans).